The sequence spans 333 residues: Ketol-acid reductoisomerase (NADP(+)) (333 aa).

The 181-residue stretch at 2 to 182 (AKIFYDSDCN…GASRAGIILT (181 aa)) folds into the KARI N-terminal Rossmann domain. Residues 25 to 28 (FGSQ), Ser-51, Ser-53, and 83 to 86 (DEKQ) each bind NADP(+). His-108 is a catalytic residue. An NADP(+)-binding site is contributed by Gly-134. The 146-residue stretch at 183–328 (TFKEETETDL…KELRKMMPWI (146 aa)) folds into the KARI C-terminal knotted domain. Asp-191, Glu-195, Glu-227, and Glu-231 together coordinate Mg(2+). Residue Ser-252 participates in substrate binding.

The protein belongs to the ketol-acid reductoisomerase family. Requires Mg(2+) as cofactor.

It carries out the reaction (2R)-2,3-dihydroxy-3-methylbutanoate + NADP(+) = (2S)-2-acetolactate + NADPH + H(+). The catalysed reaction is (2R,3R)-2,3-dihydroxy-3-methylpentanoate + NADP(+) = (S)-2-ethyl-2-hydroxy-3-oxobutanoate + NADPH + H(+). Its pathway is amino-acid biosynthesis; L-isoleucine biosynthesis; L-isoleucine from 2-oxobutanoate: step 2/4. It participates in amino-acid biosynthesis; L-valine biosynthesis; L-valine from pyruvate: step 2/4. In terms of biological role, involved in the biosynthesis of branched-chain amino acids (BCAA). Catalyzes an alkyl-migration followed by a ketol-acid reduction of (S)-2-acetolactate (S2AL) to yield (R)-2,3-dihydroxy-isovalerate. In the isomerase reaction, S2AL is rearranged via a Mg-dependent methyl migration to produce 3-hydroxy-3-methyl-2-ketobutyrate (HMKB). In the reductase reaction, this 2-ketoacid undergoes a metal-dependent reduction by NADPH to yield (R)-2,3-dihydroxy-isovalerate. In Caldicellulosiruptor bescii (strain ATCC BAA-1888 / DSM 6725 / KCTC 15123 / Z-1320) (Anaerocellum thermophilum), this protein is Ketol-acid reductoisomerase (NADP(+)).